Consider the following 1233-residue polypeptide: Structural maintenance of chromosomes protein 1A (1233 aa).

ATP is bound at residue 32-39 (GPNGSGKS). Coiled coils occupy residues 104–124 (EYKI…LEKL) and 163–503 (ELAQ…KAEI). A compositionally biased stretch (basic and acidic residues) spans 284 to 293 (IKEKDSELNQ). Disordered regions lie at residues 284 to 308 (IKEK…TSHK) and 348 to 369 (QEFE…TLEE). Phosphoserine is present on residues Ser-358 and Ser-360. Positions 515–629 (VYGRLIDLCQ…DNVEDARRIA (115 aa)) constitute an SMC hinge domain. N6-acetyllysine occurs at positions 648 and 713. The stretch at 660–935 (KAKARRWDEK…RHNLLQACKM (276 aa)) forms a coiled coil. Residues 947–966 (MDDISQEEGSSQGEDSVSGS) are disordered. Over residues 953 to 966 (EEGSSQGEDSVSGS) the composition is skewed to low complexity. Residue Ser-957 is modified to Phosphoserine; by ATM. A Phosphoserine modification is found at Ser-962. Ser-966 is subject to Phosphoserine; by ATM and ATR. At Ser-970 the chain carries Phosphoserine. A coiled-coil region spans residues 991-1068 (KDAQAEEEIK…FEQIKKERFD (78 aa)). Position 1037 is an N6-acetyllysine (Lys-1037).

It belongs to the SMC family. SMC1 subfamily. In terms of assembly, forms a heterodimer with SMC3 in cohesin complexes. Cohesin complexes are composed of the SMC1 (SMC1A or SMC1B) and SMC3 heterodimer attached via their SMC hinge domain, RAD21 which link them, and one STAG protein (STAG1, STAG2 or STAG3), which interacts with RAD21. In germ cell cohesin complexes, SMC1A is mutually exclusive with SMC1B. Interacts with BRCA1. Found in a complex with CDCA5, SMC3 and RAD21, PDS5A/SCC-112 and PDS5B/APRIN. Interacts with NDC80. Interacts with BRAT1. Found in a complex containing POLE and SMC3. Interacts with RPGR, STAG3 and SYCP2. The cohesin complex interacts with the cohesin loading complex subunits NIPBL/Scc2 (via HEAT repeats) and MAU2/Scc4. NIPBL directly contacts all members of the complex, RAD21, SMC1A/B, SMC3 and STAG1. Post-translationally, ubiquitinated by the DCX(DCAF15) complex, leading to its degradation. Phosphorylated by ATM upon ionizing radiation in a NBS1-dependent manner. Phosphorylated by ATR upon DNA methylation in a MSH2/MSH6-dependent manner. Phosphorylation of Ser-957 and Ser-966 activates it and is required for S-phase checkpoint activation.

It localises to the nucleus. Its subcellular location is the chromosome. It is found in the centromere. The protein resides in the kinetochore. Involved in chromosome cohesion during cell cycle and in DNA repair. Central component of cohesin complex. The cohesin complex is required for the cohesion of sister chromatids after DNA replication. The cohesin complex apparently forms a large proteinaceous ring within which sister chromatids can be trapped. At anaphase, the complex is cleaved and dissociates from chromatin, allowing sister chromatids to segregate. The cohesin complex may also play a role in spindle pole assembly during mitosis. Involved in DNA repair via its interaction with BRCA1 and its related phosphorylation by ATM, or via its phosphorylation by ATR. Works as a downstream effector both in the ATM/NBS1 branch and in the ATR/MSH2 branch of S-phase checkpoint. The chain is Structural maintenance of chromosomes protein 1A (SMC1A) from Homo sapiens (Human).